The chain runs to 609 residues: Putative transcriptional regulatory protein y4pA (609 aa).

One can recognise a Sigma-54 factor interaction domain in the interval 313–533 (IVGRSPSIQQ…LRSVLETAAI (221 aa)). 395-404 (HPKATLLIES) is a binding site for ATP. A DNA-binding region (H-T-H motif) is located at residues 578-597 (RGEAARYLGISRKTLYNKMR).

Its function is as follows. Probable transcriptional regulator that acts in conjunction with sigma-54. The protein is Putative transcriptional regulatory protein y4pA of Sinorhizobium fredii (strain NBRC 101917 / NGR234).